Reading from the N-terminus, the 60-residue chain is MLSMQLVTVTVQGAMVADIAVAVRTAPHPFLYASVLQDSPQARKPVRETRYQKMSAFLCT.

This is an uncharacterized protein from Treponema pallidum (strain Nichols).